We begin with the raw amino-acid sequence, 180 residues long: Translation initiation factor IF-3 (180 aa).

Belongs to the IF-3 family. In terms of assembly, monomer.

It localises to the cytoplasm. Its function is as follows. IF-3 binds to the 30S ribosomal subunit and shifts the equilibrium between 70S ribosomes and their 50S and 30S subunits in favor of the free subunits, thus enhancing the availability of 30S subunits on which protein synthesis initiation begins. This is Translation initiation factor IF-3 from Mesoplasma florum (strain ATCC 33453 / NBRC 100688 / NCTC 11704 / L1) (Acholeplasma florum).